A 222-amino-acid polypeptide reads, in one-letter code: Large ribosomal subunit protein uL11c (222 aa).

The tract at residues 1 to 20 (MASSSLSTLCSSTSSSLHPN) is disordered. The transit peptide at 1-62 (MASSSLSTLC…TPRFLTVIAM (62 aa)) directs the protein to the chloroplast.

The protein belongs to the universal ribosomal protein uL11 family. Part of the ribosomal stalk of the 50S ribosomal subunit. Interacts with L10 and the large rRNA to form the base of the stalk. L10 forms an elongated spine to which L12 dimers bind in a sequential fashion forming a multimeric L10(L12)X complex.

Its subcellular location is the plastid. The protein resides in the chloroplast. In terms of biological role, forms part of the ribosomal stalk which helps the ribosome interact with GTP-bound translation factors. The sequence is that of Large ribosomal subunit protein uL11c (RPL11) from Arabidopsis thaliana (Mouse-ear cress).